A 468-amino-acid chain; its full sequence is Adenosylhomocysteinase (468 aa).

Substrate contacts are provided by Thr-57, Asp-132, and Glu-194. Thr-195–Thr-197 contributes to the NAD(+) binding site. Substrate contacts are provided by Lys-224 and Asp-228. Residues Asn-229, Gly-258–Gly-263, Glu-281, Asn-316, Ile-337–His-339, and Asn-382 each bind NAD(+).

This sequence belongs to the adenosylhomocysteinase family. Requires NAD(+) as cofactor.

It localises to the cytoplasm. The enzyme catalyses S-adenosyl-L-homocysteine + H2O = L-homocysteine + adenosine. The protein operates within amino-acid biosynthesis; L-homocysteine biosynthesis; L-homocysteine from S-adenosyl-L-homocysteine: step 1/1. Functionally, may play a key role in the regulation of the intracellular concentration of adenosylhomocysteine. The protein is Adenosylhomocysteinase of Methylobacterium nodulans (strain LMG 21967 / CNCM I-2342 / ORS 2060).